The sequence spans 241 residues: tRNA (guanine-N(7)-)-methyltransferase (241 aa).

Residues 1–20 (MTESNDTPIQPEAGDERQHR) are disordered. S-adenosyl-L-methionine contacts are provided by Glu-71, Glu-96, Asp-123, and Asp-146. The active site involves Asp-146. Substrate contacts are provided by residues Lys-150, Asp-182, and 219 to 222 (TKFE).

It belongs to the class I-like SAM-binding methyltransferase superfamily. TrmB family.

The catalysed reaction is guanosine(46) in tRNA + S-adenosyl-L-methionine = N(7)-methylguanosine(46) in tRNA + S-adenosyl-L-homocysteine. The protein operates within tRNA modification; N(7)-methylguanine-tRNA biosynthesis. In terms of biological role, catalyzes the formation of N(7)-methylguanine at position 46 (m7G46) in tRNA. The polypeptide is tRNA (guanine-N(7)-)-methyltransferase (Pseudomonas fluorescens (strain ATCC BAA-477 / NRRL B-23932 / Pf-5)).